We begin with the raw amino-acid sequence, 190 residues long: Guanylate kinase (190 aa).

The region spanning 3-185 is the Guanylate kinase-like domain; that stretch reads NYIFIVSAPS…SLEQFCKYFE (183 aa). Residue 10 to 17 participates in ATP binding; that stretch reads APSGAGKS.

It belongs to the guanylate kinase family.

It is found in the cytoplasm. It carries out the reaction GMP + ATP = GDP + ADP. Functionally, essential for recycling GMP and indirectly, cGMP. This is Guanylate kinase from Francisella tularensis subsp. tularensis (strain FSC 198).